Reading from the N-terminus, the 115-residue chain is Succinate dehydrogenase assembly factor 3, mitochondrial (115 aa).

The protein belongs to the complex I LYR family. SDHAF3 subfamily. In terms of assembly, interacts with the iron-sulfur protein subunit within the SDH catalytic dimer.

The protein localises to the mitochondrion matrix. Plays an essential role in the assembly of succinate dehydrogenase (SDH), an enzyme complex (also referred to as respiratory complex II) that is a component of both the tricarboxylic acid (TCA) cycle and the mitochondrial electron transport chain, and which couples the oxidation of succinate to fumarate with the reduction of ubiquinone (coenzyme Q) to ubiquinol. Promotes maturation of the iron-sulfur protein subunit of the SDH catalytic dimer, protecting it from the deleterious effects of oxidants. May act together with SDHAF1. This chain is Succinate dehydrogenase assembly factor 3, mitochondrial (acn9), found in Nematostella vectensis (Starlet sea anemone).